The chain runs to 365 residues: RISC-loading complex subunit TARBP2 (365 aa).

Sufficient for interaction with PRKRA regions lie at residues 22 to 105, 151 to 233, and 286 to 365; these read MLAA…EPAL, SPQQ…DARD, and LGAL…AGSK. The region spanning 30–97 is the DRBM 1 domain; the sequence is TPISLLQEYG…AEVALKHLKG (68 aa). Ser151 carries the post-translational modification Phosphoserine. 2 consecutive DRBM domains span residues 158–226 and 292–360; these read NPVG…RVHT and ACCS…YLRI. Positions 227–365 are sufficient for interaction with DICER1; that stretch reads VPLDARDGNE…QYLRIMAGSK (139 aa).

It belongs to the TARBP2 family. In terms of assembly, self-associates. Component of the RISC loading complex (RLC), or micro-RNA (miRNA) loading complex (miRLC), which is composed of DICER1, AGO2 and TARBP2. Note that the trimeric RLC/miRLC is also referred to as RISC. Interacts with EIF2AK2/PKR and inhibits its protein kinase activity. Interacts with DHX9. Interacts with DICER1 and PRKRA. Interacts with DICER1, AGO2, MOV10, EIF6 and RPL7A (60S ribosome subunit); they form a large RNA-induced silencing complex (RISC). Interacts with IRF7; this interaction prevents IRF7 phosphorylation and activation.

The protein localises to the cytoplasm. The protein resides in the perinuclear region. It is found in the nucleus. Functionally, required for formation of the RNA induced silencing complex (RISC). Component of the RISC loading complex (RLC), also known as the micro-RNA (miRNA) loading complex (miRLC), which is composed of DICER1, AGO2 and TARBP2. Within the RLC/miRLC, DICER1 and TARBP2 are required to process precursor miRNAs (pre-miRNAs) to mature miRNAs and then load them onto AGO2. AGO2 bound to the mature miRNA constitutes the minimal RISC and may subsequently dissociate from DICER1 and TARBP2. May also play a role in the production of short interfering RNAs (siRNAs) from double-stranded RNA (dsRNA) by DICER1. Binds in vitro to the PRM1 3'-UTR. Seems to act as a repressor of translation. For some pre-miRNA substrates, may also alter the choice of cleavage site by DICER1. Negatively regulates IRF7-mediated IFN-beta signaling triggered by viral infection by inhibiting the phosphorylation of IRF7 and promoting its 'Lys'-48-linked ubiquitination and degradation. This chain is RISC-loading complex subunit TARBP2 (Tarbp2), found in Mus musculus (Mouse).